A 407-amino-acid chain; its full sequence is Elongation factor Tu (407 aa).

A tr-type G domain is found at 10 to 217 (KPHVNVGTIG…TLDTYIPDPE (208 aa)). A G1 region spans residues 19-26 (GHVDHGKT). 19-26 (GHVDHGKT) serves as a coordination point for GTP. A Mg(2+)-binding site is contributed by T26. Positions 60 to 64 (GITIS) are G2. The interval 81–84 (DCPG) is G3. Residues 81–85 (DCPGH) and 136–139 (NKSD) each bind GTP. Residues 136–139 (NKSD) form a G4 region. Residues 184 to 186 (SAL) are G5.

Belongs to the TRAFAC class translation factor GTPase superfamily. Classic translation factor GTPase family. EF-Tu/EF-1A subfamily. In terms of assembly, monomer.

It is found in the cytoplasm. It catalyses the reaction GTP + H2O = GDP + phosphate + H(+). GTP hydrolase that promotes the GTP-dependent binding of aminoacyl-tRNA to the A-site of ribosomes during protein biosynthesis. This chain is Elongation factor Tu, found in Marinomonas sp. (strain MWYL1).